We begin with the raw amino-acid sequence, 304 residues long: Protein pxr1 (304 aa).

A compositionally biased stretch (basic residues) spans 1 to 11; sequence MGLAAPRKKTK. Disordered regions lie at residues 1–25, 144–238, and 256–276; these read MGLAAPRKKTKISHDPNNTSWSRST, NATA…DTET, and TSLLASNGPSTSRERQPMGRR. Over residues 15–25 the composition is skewed to polar residues; sequence DPNNTSWSRST. The region spanning 25-79 is the G-patch domain; the sequence is TDGFGHRILKAQGWTPGDFLGARNATHSDLFTTASASHIRVVLKDDTLGLGARPK. Composition is skewed to basic and acidic residues over residues 154 to 170 and 204 to 238; these read LRVDFPRETSSNEHENG and GKEMDMSPRKSREKKQEKIQKKRKIGDCDRLDTET. Polar residues predominate over residues 256-266; sequence TSLLASNGPST.

Belongs to the PINX1 family.

It is found in the nucleus. Its subcellular location is the nucleolus. In terms of biological role, involved in rRNA-processing at A0, A1 and A2 sites and negatively regulates telomerase. This is Protein pxr1 (pxr1) from Aspergillus fumigatus (strain ATCC MYA-4609 / CBS 101355 / FGSC A1100 / Af293) (Neosartorya fumigata).